We begin with the raw amino-acid sequence, 151 residues long: Deoxyuridine 5'-triphosphate nucleotidohydrolase (151 aa).

Residues 70-72 (RSG), N83, 87-89 (LID), and M97 contribute to the substrate site.

This sequence belongs to the dUTPase family. Mg(2+) serves as cofactor.

The enzyme catalyses dUTP + H2O = dUMP + diphosphate + H(+). It functions in the pathway pyrimidine metabolism; dUMP biosynthesis; dUMP from dCTP (dUTP route): step 2/2. This enzyme is involved in nucleotide metabolism: it produces dUMP, the immediate precursor of thymidine nucleotides and it decreases the intracellular concentration of dUTP so that uracil cannot be incorporated into DNA. The sequence is that of Deoxyuridine 5'-triphosphate nucleotidohydrolase from Psychromonas ingrahamii (strain DSM 17664 / CCUG 51855 / 37).